Consider the following 107-residue polypeptide: N(4)-acetylcytidine amidohydrolase (107 aa).

Residues 9–105 enclose the ASCH domain; the sequence is TFFEFLTPLI…KLFVIEYELI (97 aa). Catalysis depends on K23, which acts as the Proton acceptor. T26 (nucleophile) is an active-site residue. The active-site Proton donor is the E76.

Belongs to the N(4)-acetylcytidine amidohydrolase family.

The enzyme catalyses N(4)-acetylcytidine + H2O = cytidine + acetate + H(+). It catalyses the reaction N(4)-acetyl-2'-deoxycytidine + H2O = 2'-deoxycytidine + acetate + H(+). It carries out the reaction N(4)-acetylcytosine + H2O = cytosine + acetate + H(+). Functionally, catalyzes the hydrolysis of N(4)-acetylcytidine (ac4C). The polypeptide is N(4)-acetylcytidine amidohydrolase (Vibrio parahaemolyticus serotype O3:K6 (strain RIMD 2210633)).